The primary structure comprises 490 residues: Bifunctional protein HldE (490 aa).

Residues 1–330 (MSRFDTLLQS…RKILPHASLA (330 aa)) form a ribokinase region. Residue 205-208 (NRKE) coordinates ATP. Aspartate 275 is a catalytic residue. Residues 358–490 (FTNGCFDILH…LVEKAREGTT (133 aa)) form a cytidylyltransferase region.

This sequence in the N-terminal section; belongs to the carbohydrate kinase PfkB family. In the C-terminal section; belongs to the cytidylyltransferase family. In terms of assembly, homodimer.

The catalysed reaction is D-glycero-beta-D-manno-heptose 7-phosphate + ATP = D-glycero-beta-D-manno-heptose 1,7-bisphosphate + ADP + H(+). The enzyme catalyses D-glycero-beta-D-manno-heptose 1-phosphate + ATP + H(+) = ADP-D-glycero-beta-D-manno-heptose + diphosphate. Its pathway is nucleotide-sugar biosynthesis; ADP-L-glycero-beta-D-manno-heptose biosynthesis; ADP-L-glycero-beta-D-manno-heptose from D-glycero-beta-D-manno-heptose 7-phosphate: step 1/4. The protein operates within nucleotide-sugar biosynthesis; ADP-L-glycero-beta-D-manno-heptose biosynthesis; ADP-L-glycero-beta-D-manno-heptose from D-glycero-beta-D-manno-heptose 7-phosphate: step 3/4. Functionally, catalyzes the phosphorylation of D-glycero-D-manno-heptose 7-phosphate at the C-1 position to selectively form D-glycero-beta-D-manno-heptose-1,7-bisphosphate. Catalyzes the ADP transfer from ATP to D-glycero-beta-D-manno-heptose 1-phosphate, yielding ADP-D-glycero-beta-D-manno-heptose. The polypeptide is Bifunctional protein HldE (Rhodopseudomonas palustris (strain BisB5)).